The chain runs to 202 residues: Methylthioribulose-1-phosphate dehydratase (202 aa).

Residues histidine 93 and histidine 95 each contribute to the Zn(2+) site.

It belongs to the aldolase class II family. MtnB subfamily. Zn(2+) serves as cofactor.

It carries out the reaction 5-(methylsulfanyl)-D-ribulose 1-phosphate = 5-methylsulfanyl-2,3-dioxopentyl phosphate + H2O. It functions in the pathway amino-acid biosynthesis; L-methionine biosynthesis via salvage pathway; L-methionine from S-methyl-5-thio-alpha-D-ribose 1-phosphate: step 2/6. Functionally, catalyzes the dehydration of methylthioribulose-1-phosphate (MTRu-1-P) into 2,3-diketo-5-methylthiopentyl-1-phosphate (DK-MTP-1-P). In Klebsiella pneumoniae subsp. pneumoniae (strain ATCC 700721 / MGH 78578), this protein is Methylthioribulose-1-phosphate dehydratase.